Here is a 258-residue protein sequence, read N- to C-terminus: Snake venom serine protease (258 aa).

A signal peptide spans 1–18 (MVLIRVLANLLILQLSYA). A propeptide spanning residues 19–24 (QKSSEL) is cleaved from the precursor. Positions 25-249 (VIGGDECNIN…YTEWIQSILA (225 aa)) constitute a Peptidase S1 domain. Disulfide bonds link cysteine 31–cysteine 163, cysteine 50–cysteine 66, cysteine 98–cysteine 256, cysteine 142–cysteine 210, cysteine 174–cysteine 189, and cysteine 200–cysteine 225. Residues histidine 65 and aspartate 110 each act as charge relay system in the active site. Asparagine 154 carries an N-linked (GlcNAc...) asparagine glycan. The active-site Charge relay system is the serine 204.

The protein belongs to the peptidase S1 family. Snake venom subfamily. As to quaternary structure, monomer. As to expression, expressed by the venom gland.

It is found in the secreted. Functionally, snake venom serine protease that may act in the hemostasis system of the prey. The protein is Snake venom serine protease of Lachesis stenophrys (Central American bushmaster).